The primary structure comprises 154 residues: L-alanine exporter AlaE (154 aa).

4 helical membrane-spanning segments follow: residues 21–41 (FAMV…LSGM), 51–71 (LVAI…RDFF), 90–110 (ILAY…VIGA), and 115–135 (IVAA…VYGY).

It belongs to the AlaE exporter family.

It is found in the cell inner membrane. Exports L-alanine. This Escherichia fergusonii (strain ATCC 35469 / DSM 13698 / CCUG 18766 / IAM 14443 / JCM 21226 / LMG 7866 / NBRC 102419 / NCTC 12128 / CDC 0568-73) protein is L-alanine exporter AlaE.